A 465-amino-acid polypeptide reads, in one-letter code: Cerebellar degeneration-related protein 2-like (465 aa).

Coiled-coil stretches lie at residues 31–64 (AAELGKTLLERNKELEESLQQMYSTNEEQVHEIE), 91–142 (ARDL…LEQL), and 188–266 (LEQE…YLLA). The segment at 282 to 315 (APEADDPQPGSGDDSNAQDGVSSPAASPSHAVRK) is disordered. 3 positions are modified to phosphoserine: serine 308, serine 318, and serine 344. A coiled-coil region spans residues 350-377 (MSILREVDEQYHALLEKYEELLSKCRQH). The disordered stretch occupies residues 382–421 (RHAGVQTSRPISRDSSWRDLLGGEESPGEGKAGEKSLSQH). A Phosphoserine modification is found at serine 407.

It belongs to the CDR2 family.

This chain is Cerebellar degeneration-related protein 2-like (Cdr2l), found in Mus musculus (Mouse).